Consider the following 2325-residue polypeptide: Protein Ycf2 (2325 aa).

3 disordered regions span residues 168–189 (SSQL…GTED), 221–251 (TEIE…EMNN), and 947–1006 (KRKK…KRKE). Low complexity predominate over residues 230-240 (KGLSGSSSKSR). Composition is skewed to basic and acidic residues over residues 241–250 (LFTEGEKEMN) and 955–1004 (KRKE…PEKR). 1436-1443 (GSIGSGRS) contributes to the ATP binding site. 3 disordered regions span residues 1510–1529 (YEDR…DYEP), 1855–1996 (LVGS…LLRP), and 2063–2179 (PAEE…DGFS). A compositionally biased stretch (acidic residues) spans 1861–1976 (TEEEVEGTEE…VEGTEDEEGE (116 aa)). Basic and acidic residues predominate over residues 1977–1989 (GTEKDSSQFDNDR). 2 stretches are compositionally biased toward acidic residues: residues 2063–2080 (PAEE…EALE) and 2087–2162 (GEEE…ENDS).

The protein belongs to the Ycf2 family.

It is found in the plastid. The protein resides in the chloroplast stroma. In terms of biological role, probable ATPase of unknown function. Its presence in a non-photosynthetic plant (Epifagus virginiana) and experiments in tobacco indicate that it has an essential function which is probably not related to photosynthesis. In Oenothera biennis (German evening primrose), this protein is Protein Ycf2.